A 306-amino-acid polypeptide reads, in one-letter code: N-acetylmuramic acid/N-acetylglucosamine kinase (306 aa).

S12 provides a ligand contact to ATP. N35 is a substrate binding site. An ATP-binding site is contributed by T124. Substrate-binding positions include 142–144 (GWG) and D149. A208 is an ATP binding site.

This sequence belongs to the eukaryotic-type N-acetylglucosamine kinase family. Requires Mg(2+) as cofactor.

The protein localises to the cytoplasm. The catalysed reaction is N-acetyl-D-glucosamine + ATP = N-acetyl-D-glucosamine 6-phosphate + ADP + H(+). It catalyses the reaction N-acetyl-D-muramate + ATP = N-acetyl-D-muramate 6-phosphate + ADP + H(+). The protein operates within cell wall biogenesis; peptidoglycan recycling. Catalyzes the ATP-dependent phosphorylation of both cell wall (peptidoglycan) amino sugars, N-acetylmuramic acid (MurNAc) and N-acetylglucosamine (GlcNAc), at the 6-hydroxyl group. Neither the non-N-acetylated forms of the cell wall sugars, i.e., glucosamine and/or muramic acid, nor epimeric hexoses or 1,6-anhydro-MurNAc are substrates for the enzyme. May have a role in the rescue of the murein sugars GlcNAc and MurNAc released from muropeptides during cell wall turnover in C.acetobutylicum. The polypeptide is N-acetylmuramic acid/N-acetylglucosamine kinase (Clostridium acetobutylicum (strain ATCC 824 / DSM 792 / JCM 1419 / IAM 19013 / LMG 5710 / NBRC 13948 / NRRL B-527 / VKM B-1787 / 2291 / W)).